The primary structure comprises 255 residues: Hemin import ATP-binding protein HmuV (255 aa).

An ABC transporter domain is found at 2-238 (LRAHNLHIRR…ESLKAVFGLE (237 aa)). 34 to 41 (GPNGAGKS) serves as a coordination point for ATP.

It belongs to the ABC transporter superfamily. Heme (hemin) importer (TC 3.A.1.14.5) family. The complex is composed of two ATP-binding proteins (HmuV), two transmembrane proteins (HmuU) and a solute-binding protein (HmuT).

The protein resides in the cell inner membrane. In terms of biological role, part of the ABC transporter complex HmuTUV involved in hemin import. Responsible for energy coupling to the transport system. The protein is Hemin import ATP-binding protein HmuV of Pseudomonas fluorescens (strain Pf0-1).